The sequence spans 380 residues: Succinyl-diaminopimelate desuccinylase (380 aa).

Residue H69 participates in Zn(2+) binding. The active site involves D71. Position 102 (D102) interacts with Zn(2+). E135 acts as the Proton acceptor in catalysis. The Zn(2+) site is built by E136, E164, and H353.

Belongs to the peptidase M20A family. DapE subfamily. As to quaternary structure, homodimer. The cofactor is Zn(2+). Requires Co(2+) as cofactor.

It carries out the reaction N-succinyl-(2S,6S)-2,6-diaminopimelate + H2O = (2S,6S)-2,6-diaminopimelate + succinate. The protein operates within amino-acid biosynthesis; L-lysine biosynthesis via DAP pathway; LL-2,6-diaminopimelate from (S)-tetrahydrodipicolinate (succinylase route): step 3/3. In terms of biological role, catalyzes the hydrolysis of N-succinyl-L,L-diaminopimelic acid (SDAP), forming succinate and LL-2,6-diaminopimelate (DAP), an intermediate involved in the bacterial biosynthesis of lysine and meso-diaminopimelic acid, an essential component of bacterial cell walls. This chain is Succinyl-diaminopimelate desuccinylase, found in Ruegeria pomeroyi (strain ATCC 700808 / DSM 15171 / DSS-3) (Silicibacter pomeroyi).